A 378-amino-acid polypeptide reads, in one-letter code: 4-hydroxy-3-methylbut-2-en-1-yl diphosphate synthase (flavodoxin) (378 aa).

[4Fe-4S] cluster is bound by residues Cys268, Cys271, Cys303, and Glu310. The disordered stretch occupies residues 359–378 (AEREKEKEKEKEKEKETQEQ).

Belongs to the IspG family. [4Fe-4S] cluster serves as cofactor.

The enzyme catalyses (2E)-4-hydroxy-3-methylbut-2-enyl diphosphate + oxidized [flavodoxin] + H2O + 2 H(+) = 2-C-methyl-D-erythritol 2,4-cyclic diphosphate + reduced [flavodoxin]. It functions in the pathway isoprenoid biosynthesis; isopentenyl diphosphate biosynthesis via DXP pathway; isopentenyl diphosphate from 1-deoxy-D-xylulose 5-phosphate: step 5/6. Its function is as follows. Converts 2C-methyl-D-erythritol 2,4-cyclodiphosphate (ME-2,4cPP) into 1-hydroxy-2-methyl-2-(E)-butenyl 4-diphosphate. The polypeptide is 4-hydroxy-3-methylbut-2-en-1-yl diphosphate synthase (flavodoxin) (Bacillus cereus (strain ZK / E33L)).